Reading from the N-terminus, the 616-residue chain is Sialic acid TRAP transporter permease protein SiaT (616 aa).

The tract at residues 1–190 (MKYINKLEEW…RISNYIKLGS (190 aa)) is TRAP transporter small permease. The next 17 membrane-spanning stretches (helical) occupy residues 9-29 (EWLG…QILS), 36-56 (PLIW…MLGI), 83-103 (TNTF…HFGI), 117-137 (GGIS…LMMF), 153-173 (YLPA…LFFA), 195-215 (IALL…WSLF), 244-264 (FPLL…TGGI), 288-308 (IGAS…AGGL), 332-352 (ASCI…YGVI), 357-377 (IAKL…ALMA), 407-427 (FWAI…LFSP), 431-451 (AIVA…ELTL), 459-479 (IEAM…TFFG), 505-525 (VLVM…ALAL), 527-547 (FLVL…LIFF), 552-572 (TLNM…FVVA), and 587-607 (LPFL…PQII). The TRAP transporter large permease stretch occupies residues 191–616 (SSVYIALLVW…ITFVPNLLIP (426 aa)).

It in the N-terminal section; belongs to the TRAP transporter small permease family. In the C-terminal section; belongs to the TRAP transporter large permease family. The complex comprises the extracytoplasmic solute receptor protein SiaP, and the fused transmembrane protein SiaT.

The protein resides in the cell inner membrane. In terms of biological role, part of the tripartite ATP-independent periplasmic (TRAP) transport system SiaPT involved in the uptake of sialic acid. In Haemophilus influenzae (strain 86-028NP), this protein is Sialic acid TRAP transporter permease protein SiaT (siaT).